We begin with the raw amino-acid sequence, 327 residues long: uncharacterized protein (327 aa).

Residues 12–31 (PLGTTKSYHMNTSTVSPPSP) are disordered. The next 2 helical transmembrane spans lie at 183–203 (VSSPSVEVYIAGCCGGVPVIL) and 292–312 (VGVGIGLGMCLGVGIGVGLLM).

The protein resides in the membrane. This is an uncharacterized protein from Arabidopsis thaliana (Mouse-ear cress).